Reading from the N-terminus, the 151-residue chain is Ribosomal RNA large subunit methyltransferase H (151 aa).

S-adenosyl-L-methionine is bound by residues leucine 73, glycine 100, and 119 to 124 (LTKLTL).

It belongs to the RNA methyltransferase RlmH family. In terms of assembly, homodimer.

It localises to the cytoplasm. The enzyme catalyses pseudouridine(1915) in 23S rRNA + S-adenosyl-L-methionine = N(3)-methylpseudouridine(1915) in 23S rRNA + S-adenosyl-L-homocysteine + H(+). Functionally, specifically methylates the pseudouridine at position 1915 (m3Psi1915) in 23S rRNA. This chain is Ribosomal RNA large subunit methyltransferase H, found in Campylobacter hominis (strain ATCC BAA-381 / DSM 21671 / CCUG 45161 / LMG 19568 / NCTC 13146 / CH001A).